The chain runs to 2166 residues: Protein TIC236, chloroplastic (2166 aa).

A chloroplast-targeting transit peptide spans 1–37 (MSLRLQNPFLSTPLLHGSFNRREKRINVARRAFRSKR). Over 38-101 (IYSEKKQNDW…RSLAPVWEEG (64 aa)) the chain is Stromal. A helical membrane pass occupies residues 102–122 (LFFLRCSVFFAVISGVCLLVW). Topologically, residues 123-2166 (YGQNKARVFV…LFEYSATSQD (2044 aa)) are chloroplast intermembrane. Residues 1611–1649 (MSEGEVSETDRGGAVKIPSWAKEKEDDEKRTSRDRSEER) are disordered. The span at 1631-1649 (AKEKEDDEKRTSRDRSEER) shows a compositional bias: basic and acidic residues.

It belongs to the TamB family. In terms of assembly, part of the TIC complex, which can interact with components of the TOC complex to form a larger import complex. Interacts with the TOC complex component TOC75-3.

It is found in the plastid. The protein resides in the chloroplast inner membrane. It localises to the chloroplast intermembrane space. Its function is as follows. Part of the inner chloroplast membrane translocon complex (TIC) which associates with the outer chloroplast membrane translocon complex (TOC) and forms a supercomplex involved in protein precursor import into the chloroplast stroma. Required for the import of HSP93, TIC40 and RBCS protein precursors in the chloroplast stroma. Links the outer and inner membrane translocons of the chloroplast envelope. This Arabidopsis thaliana (Mouse-ear cress) protein is Protein TIC236, chloroplastic.